Here is a 188-residue protein sequence, read N- to C-terminus: Probable chorismate pyruvate-lyase (188 aa).

Substrate-binding residues include arginine 90, leucine 128, and glutamate 175.

This sequence belongs to the UbiC family.

The protein localises to the cytoplasm. The enzyme catalyses chorismate = 4-hydroxybenzoate + pyruvate. The protein operates within cofactor biosynthesis; ubiquinone biosynthesis. In terms of biological role, removes the pyruvyl group from chorismate, with concomitant aromatization of the ring, to provide 4-hydroxybenzoate (4HB) for the ubiquinone pathway. This is Probable chorismate pyruvate-lyase from Marinobacter nauticus (strain ATCC 700491 / DSM 11845 / VT8) (Marinobacter aquaeolei).